The primary structure comprises 239 residues: Cysteine-rich venom protein (239 aa).

Positions 1-18 are cleaved as a signal peptide; that stretch reads MIVFILLSLAAVLQQSVA. The region spanning 37 to 165 is the SCP domain; the sequence is VDMHNSFRRS…PYNYFYVCQY (129 aa). 7 disulfides stabilise this stretch: C74–C152, C91–C166, C147–C163, C185–C192, C188–C197, C210–C228, and C219–C232. The region spanning 201–234 is the ShKT domain; it reads CPINNVFTNCDSLLQQSSCEDSYITTNCGASCFC.

Belongs to the CRISP family. In terms of tissue distribution, expressed by the venom gland.

The protein resides in the secreted. Blocks contraction of smooth muscle elicited by high potassium-induced depolarization, but does not block caffeine-stimulated contraction. May target voltage-gated calcium channels on smooth muscle. This Cerberus rynchops (Dog-faced water snake) protein is Cysteine-rich venom protein.